A 434-amino-acid polypeptide reads, in one-letter code: Putative G3BP-like protein (434 aa).

In terms of domain architecture, NTF2 spans 18 to 134 (IGWMFVQEYY…YFVLNDIFRF (117 aa)). Disordered stretches follow at residues 141 to 180 (EEEE…EGHY) and 274 to 308 (VKSQ…PYTQ). Serine 145 carries the post-translational modification Phosphoserine. A compositionally biased stretch (basic and acidic residues) spans 148–157 (AVEKEKKDVA). Residues 276–291 (SQASVSSTASTTGQTV) show a composition bias toward low complexity. Positions 296-308 (ADQTQQPTAPYTQ) are enriched in polar residues. The 72-residue stretch at 315 to 386 (TSVFVKNIPP…ATLNIEERRR (72 aa)) folds into the RRM domain. A disordered region spans residues 390–434 (GKFNKSGDKKSNDNYNGMKRNFRKGNRGAFDGRSKEVTTSKKQNN). A compositionally biased stretch (basic and acidic residues) spans 419-428 (FDGRSKEVTT).

Probable scaffold protein that may be involved in mRNA transport. The chain is Putative G3BP-like protein (nxt3) from Schizosaccharomyces pombe (strain 972 / ATCC 24843) (Fission yeast).